The sequence spans 324 residues: Beta-ketoacyl-[acyl-carrier-protein] synthase III (324 aa).

Catalysis depends on residues cysteine 112 and histidine 249. Residues 250 to 254 are ACP-binding; the sequence is QANRR. The active site involves asparagine 279.

The protein belongs to the thiolase-like superfamily. FabH family. In terms of assembly, homodimer.

It is found in the cytoplasm. The enzyme catalyses malonyl-[ACP] + acetyl-CoA + H(+) = 3-oxobutanoyl-[ACP] + CO2 + CoA. It functions in the pathway lipid metabolism; fatty acid biosynthesis. Catalyzes the condensation reaction of fatty acid synthesis by the addition to an acyl acceptor of two carbons from malonyl-ACP. Catalyzes the first condensation reaction which initiates fatty acid synthesis and may therefore play a role in governing the total rate of fatty acid production. Possesses both acetoacetyl-ACP synthase and acetyl transacylase activities. Its substrate specificity determines the biosynthesis of branched-chain and/or straight-chain of fatty acids. This chain is Beta-ketoacyl-[acyl-carrier-protein] synthase III, found in Streptococcus pyogenes serotype M6 (strain ATCC BAA-946 / MGAS10394).